The chain runs to 1067 residues: Tricorn protease homolog 1 (1067 aa).

The tract at residues 518-551 (TTPSPFGPQRHGRPFETPDREETPDSEGTPTTRI) is disordered. The span at 530–540 (RPFETPDREET) shows a compositional bias: basic and acidic residues. Residue His740 is the Charge relay system of the active site. A PDZ-like region spans residues 754–851 (RQGLLGADLS…HAVVVPLADE (98 aa)). Gly914 serves as a coordination point for substrate. Ser961 acts as the Nucleophile in catalysis. Glu1019 functions as the Charge relay system in the catalytic mechanism.

The protein belongs to the peptidase S41B family. As to quaternary structure, forms a homohexameric complex; it is not known if it assembles into higher-order structures.

It is found in the cytoplasm. Its activity is regulated as follows. Stimulated by MgCl2. In terms of biological role, degrades oligopeptides in a sequential manner. The polypeptide is Tricorn protease homolog 1 (tri1) (Streptomyces coelicolor (strain ATCC BAA-471 / A3(2) / M145)).